The sequence spans 554 residues: Arginine--tRNA ligase (554 aa).

The 'HIGH' region motif lies at 132–142 (ANPTGPIHLGG).

It belongs to the class-I aminoacyl-tRNA synthetase family. As to quaternary structure, monomer.

Its subcellular location is the cytoplasm. The enzyme catalyses tRNA(Arg) + L-arginine + ATP = L-arginyl-tRNA(Arg) + AMP + diphosphate. This chain is Arginine--tRNA ligase, found in Clavibacter sepedonicus (Clavibacter michiganensis subsp. sepedonicus).